Here is a 140-residue protein sequence, read N- to C-terminus: FLYWCH family member 2 (140 aa).

Disordered regions lie at residues 1 to 39 (MPLP…PRKF) and 84 to 140 (HPEA…GKSL). Phosphoserine is present on serine 21. Over residues 98-114 (PEQKRSRQDPGTDRTED) the composition is skewed to basic and acidic residues. A compositionally biased stretch (low complexity) spans 118-127 (AAGPPEAAGE).

The chain is FLYWCH family member 2 (FLYWCH2) from Homo sapiens (Human).